Consider the following 599-residue polypeptide: NADH-quinone oxidoreductase subunit C/D (599 aa).

Positions 1 to 189 (MTELMTQNSA…DPFVLTKQKE (189 aa)) are NADH dehydrogenase I subunit C. The tract at residues 213-599 (DFMFLNLGPN…IDFVMSDVDR (387 aa)) is NADH dehydrogenase I subunit D.

It in the N-terminal section; belongs to the complex I 30 kDa subunit family. The protein in the C-terminal section; belongs to the complex I 49 kDa subunit family. As to quaternary structure, NDH-1 is composed of 13 different subunits. Subunits NuoB, CD, E, F, and G constitute the peripheral sector of the complex.

The protein resides in the cell inner membrane. It carries out the reaction a quinone + NADH + 5 H(+)(in) = a quinol + NAD(+) + 4 H(+)(out). Its function is as follows. NDH-1 shuttles electrons from NADH, via FMN and iron-sulfur (Fe-S) centers, to quinones in the respiratory chain. The immediate electron acceptor for the enzyme in this species is believed to be ubiquinone. Couples the redox reaction to proton translocation (for every two electrons transferred, four hydrogen ions are translocated across the cytoplasmic membrane), and thus conserves the redox energy in a proton gradient. The chain is NADH-quinone oxidoreductase subunit C/D from Sodalis glossinidius (strain morsitans).